The chain runs to 198 residues: Large ribosomal subunit protein bL25 (198 aa).

This sequence belongs to the bacterial ribosomal protein bL25 family. CTC subfamily. As to quaternary structure, part of the 50S ribosomal subunit; part of the 5S rRNA/L5/L18/L25 subcomplex. Contacts the 5S rRNA. Binds to the 5S rRNA independently of L5 and L18.

Its function is as follows. This is one of the proteins that binds to the 5S RNA in the ribosome where it forms part of the central protuberance. The protein is Large ribosomal subunit protein bL25 of Azotobacter vinelandii (strain DJ / ATCC BAA-1303).